Here is a 161-residue protein sequence, read N- to C-terminus: Ribonuclease P protein component (161 aa).

A disordered region spans residues 1–20 (MPDELRAEKSFPSKPYDSLK).

This sequence belongs to the RnpA family. As to quaternary structure, consists of a catalytic RNA component (M1 or rnpB) and a protein subunit.

It carries out the reaction Endonucleolytic cleavage of RNA, removing 5'-extranucleotides from tRNA precursor.. Functionally, RNaseP catalyzes the removal of the 5'-leader sequence from pre-tRNA to produce the mature 5'-terminus. It can also cleave other RNA substrates such as 4.5S RNA. The protein component plays an auxiliary but essential role in vivo by binding to the 5'-leader sequence and broadening the substrate specificity of the ribozyme. The polypeptide is Ribonuclease P protein component (Helicobacter pylori (strain P12)).